A 712-amino-acid chain; its full sequence is Ribosomal RNA large subunit methyltransferase K/L (712 aa).

The 112-residue stretch at 46 to 157 (GAYQALLHSR…REKLIVSLDL (112 aa)) folds into the THUMP domain.

It belongs to the methyltransferase superfamily. RlmKL family.

It is found in the cytoplasm. The enzyme catalyses guanosine(2445) in 23S rRNA + S-adenosyl-L-methionine = N(2)-methylguanosine(2445) in 23S rRNA + S-adenosyl-L-homocysteine + H(+). The catalysed reaction is guanosine(2069) in 23S rRNA + S-adenosyl-L-methionine = N(2)-methylguanosine(2069) in 23S rRNA + S-adenosyl-L-homocysteine + H(+). In terms of biological role, specifically methylates the guanine in position 2445 (m2G2445) and the guanine in position 2069 (m7G2069) of 23S rRNA. This is Ribosomal RNA large subunit methyltransferase K/L from Haemophilus ducreyi (strain 35000HP / ATCC 700724).